Consider the following 459-residue polypeptide: Cysteine--tRNA ligase (459 aa).

Cys-29 provides a ligand contact to Zn(2+). The short motif at Met-31–His-41 is the 'HIGH' region element. Residues Cys-213, His-238, and Glu-242 each coordinate Zn(2+). A 'KMSKS' region motif is present at residues Lys-270–Ser-274. Position 273 (Lys-273) interacts with ATP.

It belongs to the class-I aminoacyl-tRNA synthetase family. Monomer. Zn(2+) serves as cofactor.

It is found in the cytoplasm. It catalyses the reaction tRNA(Cys) + L-cysteine + ATP = L-cysteinyl-tRNA(Cys) + AMP + diphosphate. This is Cysteine--tRNA ligase from Albidiferax ferrireducens (strain ATCC BAA-621 / DSM 15236 / T118) (Rhodoferax ferrireducens).